Here is a 149-residue protein sequence, read N- to C-terminus: MKYQQLENLECGWKWKYLIKKWKDGEAVTRYIDTSEADAAIAELRKLEHEPTQVLAWIENHMSEALDNKLKQAIRAKRKRHFNAEQVHTKKKSIDLDYRVWEKLSNRANELGCTLSDAIEYLLSEASRSEKASMKVSSLKEDLSKLLSS.

It belongs to the MatP family. In terms of assembly, homodimer.

The protein localises to the cytoplasm. In terms of biological role, required for spatial organization of the terminus region of the chromosome (Ter macrodomain) during the cell cycle. Prevents early segregation of duplicated Ter macrodomains during cell division. Binds specifically to matS, which is a 13 bp signature motif repeated within the Ter macrodomain. The protein is Macrodomain Ter protein of Vibrio campbellii (strain ATCC BAA-1116).